Reading from the N-terminus, the 397-residue chain is 4-hydroxyphenylpyruvate dioxygenase (397 aa).

VOC domains are found at residues 18 to 149 (NFHH…FVEY) and 181 to 339 (FIDH…IFTK). Fe cation-binding residues include H184, H267, and E350.

It belongs to the 4HPPD family. Homodimer. Fe cation serves as cofactor.

It localises to the cytoplasm. It is found in the endoplasmic reticulum membrane. The protein localises to the golgi apparatus membrane. The enzyme catalyses 3-(4-hydroxyphenyl)pyruvate + O2 = homogentisate + CO2. Its pathway is amino-acid degradation; L-phenylalanine degradation; acetoacetate and fumarate from L-phenylalanine: step 3/6. Catalyzes the conversion of 4-hydroxyphenylpyruvic acid to homogentisic acid, one of the steps in tyrosine catabolism. The polypeptide is 4-hydroxyphenylpyruvate dioxygenase (hpd) (Danio rerio (Zebrafish)).